The chain runs to 90 residues: DNA-binding protein HU-alpha (90 aa).

The protein belongs to the bacterial histone-like protein family. In terms of assembly, heterodimer of an alpha and a beta chain.

Functionally, histone-like DNA-binding protein which is capable of wrapping DNA to stabilize it, and thus to prevent its denaturation under extreme environmental conditions. The polypeptide is DNA-binding protein HU-alpha (hupA) (Salmonella typhi).